A 1059-amino-acid chain; its full sequence is Dihydropyrimidine dehydrogenase [NADP(+)] (1059 aa).

The region spanning 84-118 is the 4Fe-4S ferredoxin-type 1 domain; that stretch reads ERGALKEAMRCLKCADAPCQKSCPTQLDVKSFITS. 8 residues coordinate [4Fe-4S] cluster: Cys94, Cys97, Cys102, Cys106, Cys145, Cys151, Cys155, and Gln171. FAD-binding positions include 207–211, 231–239, Arg248, and Leu274; these read GCGPA and EKRAYIGGL. Residues 354-357, 378-379, Arg385, 451-453, and 495-501 each bind NADP(+); these read AGDT, RK, AFG, and DVAGVAE. 494-503 is an FAD binding site; the sequence is GDVAGVAETT. FMN-binding positions include Ser564 and 588–589; that span reads KT. Substrate-binding positions include Asn623 and 682–684; that span reads NLS. Cys685 serves as the catalytic Proton acceptor. FMN is bound at residue Lys723. Position 750 to 751 (750 to 751) interacts with substrate; sequence NT. Residues Gly781, 807 to 809, and 830 to 831 contribute to the FMN site; these read TGG and CS. 4Fe-4S ferredoxin-type domains follow at residues 955–987 and 989–1019; these read KVAIIDDDMCINCGKCYMTCNDSGYQAITFDPV and HQPHVTEDDCTGCTLCYSVCPIPECIEMVPR. Residues Cys964, Cys967, Cys970, Cys974, Cys998, Cys1001, Cys1004, and Cys1008 each contribute to the [4Fe-4S] cluster site.

The protein belongs to the dihydropyrimidine dehydrogenase family. It depends on [4Fe-4S] cluster as a cofactor. FAD serves as cofactor. Requires FMN as cofactor.

It catalyses the reaction 5,6-dihydrouracil + NADP(+) = uracil + NADPH + H(+). It functions in the pathway amino-acid biosynthesis; beta-alanine biosynthesis. Functionally, involved in pyrimidine base degradation. Catalyzes the reduction of uracil and thymine. Involved in the degradation of the chemotherapeutic drug 5-fluorouracil. This Caenorhabditis elegans protein is Dihydropyrimidine dehydrogenase [NADP(+)] (dpyd-1).